We begin with the raw amino-acid sequence, 412 residues long: Putative competence-damage inducible protein (412 aa).

The protein belongs to the CinA family.

In Bacillus cereus (strain ZK / E33L), this protein is Putative competence-damage inducible protein.